The chain runs to 652 residues: Complement component C1q receptor (652 aa).

The N-terminal stretch at 1–21 is a signal peptide; the sequence is MATSMGLLLLLLLLLTQPGAG. Residues 24 to 580 are Extracellular-facing; that stretch reads ADTEAVVCVG…QNNDGTDGQK (557 aa). The C-type lectin domain maps to 32 to 174; it reads VGTACYTAHS…CGSPGSPGSN (143 aa). 16 cysteine pairs are disulfide-bonded: cysteine 141–cysteine 165, cysteine 264–cysteine 275, cysteine 271–cysteine 285, cysteine 287–cysteine 300, cysteine 306–cysteine 317, cysteine 311–cysteine 328, cysteine 330–cysteine 343, cysteine 349–cysteine 358, cysteine 354–cysteine 367, cysteine 369–cysteine 383, cysteine 389–cysteine 400, cysteine 396–cysteine 409, cysteine 411–cysteine 425, cysteine 431–cysteine 443, cysteine 439–cysteine 452, and cysteine 454–cysteine 467. EGF-like domains are found at residues 260–301 and 302–344; these read PKYG…VTCA and SRNP…LDCV. Asparagine 325 carries an N-linked (GlcNAc...) asparagine glycan. In terms of domain architecture, EGF-like 3; calcium-binding spans 345–384; it reads DVDECQDSPCAQECVNTPGGFRCECWVGYEPGGPGEGACQ. An EGF-like 4; calcium-binding domain is found at 385 to 426; sequence DVDECALGRSPCAQGCTNTDGSFHCSCEEGYVLAGEDGTQCQ. In terms of domain architecture, EGF-like 5; calcium-binding spans 427-468; the sequence is DVDECVGPGGPLCDSLCFNTQGSFHCGCLPGWVLAPNGVSCT. Disordered stretches follow at residues 472-546 and 553-572; these read VSLG…VWRE and TAAS…ATQN. The segment covering 512 to 526 has biased composition (polar residues); sequence ATPTTSRPSLSSDAP. Residues 581–601 traverse the membrane as a helical segment; that stretch reads LLLFYILGTVVAILLLLALAL. The Cytoplasmic portion of the chain corresponds to 602–652; sequence GLLVYRKRRAKREEKKEKKPQNAADSYSWVPERAESRAMENQYSPTPGTDC. Residues 611–652 are disordered; the sequence is AKREEKKEKKPQNAADSYSWVPERAESRAMENQYSPTPGTDC. Residues 612–621 are compositionally biased toward basic and acidic residues; that stretch reads KREEKKEKKP. Serine 627 carries the post-translational modification Phosphoserine. A phosphotyrosine mark is found at tyrosine 628 and tyrosine 644. Residues 640–652 are compositionally biased toward polar residues; that stretch reads MENQYSPTPGTDC.

As to quaternary structure, homodimer. Interacts with C1QBP; the association may represent a cell surface C1q receptor. Interacts with surfactant protein A/SFTPA1. Interacts with multimerin-2/MMRN2. Interacts with DAG1; this interaction plays an important role in endothelial cell migration. Interacts with CBL. Interacts with IGFBP7. Interacts with VEGFR2. (Microbial infection) Interacts with hepatitis virus C/HCV core protein. N- and O-glycosylated. In terms of processing, phosphorylated on Tyr-628 and Tyr-644 by SRC; these phosphorylations promote endothelial cell adhesion and migration. As to expression, highly expressed in endothelial cells, platelets, cells of myeloid origin, such as monocytes and neutrophils. Not expressed in cells of lymphoid origin.

Its subcellular location is the cell membrane. In terms of biological role, cell surface receptor that plays a role in various physiological processes including inflammation, phagocytosis, and cell adhesion. Plays a role in phagocytosis and enhances the uptake of apoptotic cells and immune complexes by acting as a receptor for defense collagens including surfactant protein A/SFTPA1, C1q, and mannose-binding lectin (MBL2). Plays a role in the regulation of endothelial cell function and adhesion by activating angiogenesis. Mechanistically, exerts its angiogenic function by associating with beta-dystroglycan, leading to SRC-dependent phosphorylation and subsequent recruitment of CBL. In turn, CBL provides a docking site for downstream signaling components, such as CRKL to enhance cell migration. Participates in angiogenesis also by acting as a receptor for the ECM pan-endothelial glycoprotein multimerin-2/MMRN2 and IGFBP7 ligands. Both ligands play a non-redundant role in CD93-mediated endothelial cell function. Acts as a key regulator of endothelial barrier function through modulating VEGFR2 function. In Homo sapiens (Human), this protein is Complement component C1q receptor (CD93).